The following is a 399-amino-acid chain: Alpha-ketoglutarate-dependent dioxygenase fc-dox (399 aa).

Fe cation is bound by residues His158 and Asp160. 2-oxoglutarate is bound at residue Thr203. Residue His355 coordinates Fe cation. Arg367 contributes to the 2-oxoglutarate binding site. Residues 371 to 399 (QGWLAGDRPPKGPVPIPDPRARSSIYYQK) form a disordered region.

It belongs to the TfdA dioxygenase family. Fe(2+) is required as a cofactor.

The protein operates within mycotoxin biosynthesis. Its function is as follows. Alpha-ketoglutarate-dependent dioxygenase; part of the 2 gene clusters that mediate the biosynthesis of fusicoccins, diterpene glucosides that display phytohormone-like activity and function as potent activators of plasma membrane H(+)-ATPases in plants by modifying 14-3-3 proteins and cause the plant disease constriction canker. The first step in the pathway is performed by the fusicoccadiene synthase PaFS that possesses both prenyl transferase and terpene cyclase activity, converting isopentenyl diphosphate and dimethylallyl diphosphate into geranylgeranyl diphosphate (GGDP) and successively converting GGDP into fusicocca-2,10(14)-diene, a precursor for fusicoccin H. The second step is the oxidation at the C-8 position by the cytochrome P450 monooxygenase PaP450-2 to yield fusicocca-2,10(14)-diene-8-beta-ol. The cytochrome P450 monooxygenase PaP450-1 then catalyzes the hydroxylation at the C-16 position to produce fusicocca-2,10(14)-diene-8-beta,16-diol. The dioxygenase fc-dox then catalyzes the 16-oxydation of fusicocca-2,10(14)-diene-8-beta,16-diol to yield an aldehyde (8-beta-hydroxyfusicocca-1,10(14)-dien-16-al). The short-chain dehydrogenase/reductase fc-sdr catalyzes the reduction of the aldehyde to yield fusicocca-1,10(14)-diene-8-beta,16-diol. The next step is the hydroxylation at C-9 performed by the cytochrome P450 monooxygenase PaP450-3 that leads to fusicoccin H aglycon which is glycosylated to fusicoccin H by the O-glycosyltransferase PaGT. Hydroxylation at C-12 by the cytochrome P450 monooxygenase PaP450-4 leads then to the production of fusicoccin Q and is followed by methylation by the O-methyltransferase PaMT to yield fusicoccin P. Fusicoccin P is further converted to fusicoccin J via prenylation by the O-glucose prenyltransferase PaPT. Cytochrome P450 monooxygenase PaP450-5 then performs hydroxylation at C-19 to yield dideacetyl-fusicoccin A which is acetylated to 3'-O-deacetyl-fusicoccin A by the O-acetyltransferase PaAT-2. Finally, a another acetylation by the O-acetyltransferase PaAT-1 yields fusicoccin A. The protein is Alpha-ketoglutarate-dependent dioxygenase fc-dox of Phomopsis amygdali (Fusicoccum amygdali).